Consider the following 180-residue polypeptide: uncharacterized protein (180 aa).

Residues 1–21 form the signal peptide; that stretch reads MKQCIAFMAILALSLSAISEA. The interval 23–81 is disordered; the sequence is GGRGVRSSGYSRPVATKPAPAPKQTQTQQQSQQPDATFGQQNMQNTATNTPNNPNNRLA. The segment covering 27-78 has biased composition (low complexity); sequence VRSSGYSRPVATKPAPAPKQTQTQQQSQQPDATFGQQNMQNTATNTPNNPNN.

This is an uncharacterized protein from Pasteurella multocida (strain Pm70).